A 469-amino-acid chain; its full sequence is GTPase Der (469 aa).

EngA-type G domains follow at residues 3-166 (PVIA…PEDE) and 177-350 (LRLA…ESAN). Residues 9–16 (GRPNVGKS), 56–60 (DTGGI), 118–121 (NKVD), 183–190 (GRPNVGKS), 230–234 (DTAGV), and 295–298 (NKWD) each bind GTP. The region spanning 351-435 (LKVSPAKLTQ…PVKIEFKTSE (85 aa)) is the KH-like domain.

Belongs to the TRAFAC class TrmE-Era-EngA-EngB-Septin-like GTPase superfamily. EngA (Der) GTPase family. In terms of assembly, associates with the 50S ribosomal subunit.

In terms of biological role, GTPase that plays an essential role in the late steps of ribosome biogenesis. This is GTPase Der from Acinetobacter baumannii (strain AB0057).